Here is a 428-residue protein sequence, read N- to C-terminus: Enolase (428 aa).

Q163 is a binding site for (2R)-2-phosphoglycerate. Catalysis depends on E205, which acts as the Proton donor. 3 residues coordinate Mg(2+): D242, E285, and D312. (2R)-2-phosphoglycerate-binding residues include K337, R366, S367, and K388. K337 (proton acceptor) is an active-site residue.

It belongs to the enolase family. It depends on Mg(2+) as a cofactor.

The protein resides in the cytoplasm. Its subcellular location is the secreted. It localises to the cell surface. It catalyses the reaction (2R)-2-phosphoglycerate = phosphoenolpyruvate + H2O. The protein operates within carbohydrate degradation; glycolysis; pyruvate from D-glyceraldehyde 3-phosphate: step 4/5. Functionally, catalyzes the reversible conversion of 2-phosphoglycerate (2-PG) into phosphoenolpyruvate (PEP). It is essential for the degradation of carbohydrates via glycolysis. The protein is Enolase of Neisseria gonorrhoeae (strain ATCC 700825 / FA 1090).